We begin with the raw amino-acid sequence, 501 residues long: Sarpagan bridge enzyme (501 aa).

A helical; Signal-anchor for type II membrane protein membrane pass occupies residues 3–23 (VMQLSFSYPALFLFVFFLFML). Residue Cys-441 coordinates heme.

Belongs to the cytochrome P450 family. Heme is required as a cofactor. In terms of tissue distribution, highly expressed in roots. Expressed at low levels in stems.

It is found in the endoplasmic reticulum membrane. The catalysed reaction is (19E)-geissoschizine + reduced [NADPH--hemoprotein reductase] + O2 = polyneuridine aldehyde + oxidized [NADPH--hemoprotein reductase] + 2 H2O + H(+). It carries out the reaction tetrahydroalstonine + A + reduced [NADPH--hemoprotein reductase] + O2 = alstonine + AH2 + oxidized [NADPH--hemoprotein reductase] + 2 H2O + H(+). It catalyses the reaction ajmalicine + A + reduced [NADPH--hemoprotein reductase] + O2 = serpentine + AH2 + oxidized [NADPH--hemoprotein reductase] + 2 H2O + H(+). The protein operates within alkaloid biosynthesis; ajmaline biosynthesis. In terms of biological role, monooxygenase involved in the biosynthesis of ajmaline-type monoterpenoid indole alkaloids (MIAs) natural products, important plant-derived pharmaceuticals used in the therapy of heart disorders. Converts by cyclization the strictosidine-derived geissoschizine to the sarpagan alkaloid polyneuridine aldehyde, precursor of vomilenine, an intermediate chemical in the biosynthesis of ajmaline. Converts by aromatization the tetrahydro-beta-carboline alkaloids tetrahydroalstonine and ajmalicine to the corresponding beta-carboline alkaloids alstonine and serpentine, respectively. The sequence is that of Sarpagan bridge enzyme from Gelsemium sempervirens (Carolina jasmine).